An 840-amino-acid polypeptide reads, in one-letter code: 9-beta-pimara-7,15-diene synthase, chloroplastic (840 aa).

The N-terminal 56 residues, 1 to 56 (MASPMEAVARSSLVLAPRRRRALGLLPAAAAPFVLDCRRRHNGGMRRPHVSFACSA), are a transit peptide targeting the chloroplast. 5 residues coordinate Mg(2+): Asp-589, Asp-593, Asn-733, Ser-737, and Glu-741. Positions 589-593 (DDFFD) match the DDXXD motif motif.

The protein belongs to the terpene synthase family. Mg(2+) serves as cofactor.

The protein resides in the plastid. It is found in the chloroplast. The enzyme catalyses 9alpha-copalyl diphosphate = 9beta-pimara-7,15-diene + diphosphate. Involved in the biosynthesis of momilactone A and B phytoalexins. Catalyzes the conversion of syn-copalyl diphosphate to the phytoalexin precursor syn-pimara-7,15-diene. The chain is 9-beta-pimara-7,15-diene synthase, chloroplastic from Oryza sativa subsp. indica (Rice).